The following is a 337-amino-acid chain: Glyceraldehyde-3-phosphate dehydrogenase (337 aa).

Residues Arg-12–Ile-13, Asp-34, and Arg-79 each bind NAD(+). Residues Ser-150–Thr-152, Thr-181, Thr-210–Gly-211, and Arg-233 contribute to the D-glyceraldehyde 3-phosphate site. Residue Cys-151 is the Nucleophile of the active site. Asn-315 serves as a coordination point for NAD(+).

It belongs to the glyceraldehyde-3-phosphate dehydrogenase family. As to quaternary structure, homotetramer.

It is found in the cytoplasm. It catalyses the reaction D-glyceraldehyde 3-phosphate + phosphate + NAD(+) = (2R)-3-phospho-glyceroyl phosphate + NADH + H(+). It functions in the pathway carbohydrate degradation; glycolysis; pyruvate from D-glyceraldehyde 3-phosphate: step 1/5. The chain is Glyceraldehyde-3-phosphate dehydrogenase (GPD) from Coccidioides posadasii (strain C735) (Valley fever fungus).